The primary structure comprises 181 residues: RNA-binding protein (181 aa).

Residues 106 to 181 (FLTSVNPGES…DANTRKSKRK (76 aa)) form a disordered region. A compositionally biased stretch (basic residues) spans 141-157 (RNSKKGAKKSSSARKKK). The segment covering 160 to 172 (SSNSETDLSSDSD) has biased composition (low complexity).

This sequence belongs to the phytoreovirus RNA-binding protein family.

It is found in the host cytoplasm. Its function is as follows. Constituent of viral factories. Binds to ssRNA and dsRNA. The protein is RNA-binding protein of Rice dwarf virus (isolate Akita) (RDV).